We begin with the raw amino-acid sequence, 153 residues long: Neuromedin-S (153 aa).

Positions 1–26 are cleaved as a signal peptide; it reads MKHLRPQFPLILAIYCFCMLQIPSSG. Propeptides lie at residues 27–69, 70–105, and 106–108; these read FPQP…IYKR, FLFHYSRTQEATHPVKTGFPPVHPLMHLAAKLANRR, and MKR. Asparagine 141 carries the post-translational modification Asparagine amide. Residues 144 to 153 constitute a propeptide that is removed on maturation; sequence NIEDEAQIQW.

Belongs to the NmU family.

It is found in the secreted. Functionally, implicated in the regulation of circadian rhythms through autocrine and/or paracrine actions. The protein is Neuromedin-S (NMS) of Homo sapiens (Human).